Reading from the N-terminus, the 315-residue chain is Homoserine kinase (315 aa).

97 to 107 (PPARGLGSSAT) lines the ATP pocket.

Belongs to the GHMP kinase family. Homoserine kinase subfamily.

It localises to the cytoplasm. The catalysed reaction is L-homoserine + ATP = O-phospho-L-homoserine + ADP + H(+). The protein operates within amino-acid biosynthesis; L-threonine biosynthesis; L-threonine from L-aspartate: step 4/5. Its function is as follows. Catalyzes the ATP-dependent phosphorylation of L-homoserine to L-homoserine phosphate. This chain is Homoserine kinase, found in Prochlorococcus marinus (strain MIT 9515).